Consider the following 771-residue polypeptide: Dol-P-Glc:Glc(2)Man(9)GlcNAc(2)-PP-Dol alpha-1,2-glucosyltransferase (771 aa).

Helical transmembrane passes span 45-65 (FITA…LALV), 160-180 (VSFY…IFFF), 182-202 (GLYY…WNHL), 221-241 (VVLG…VVVY), 293-313 (VDMA…IAAL), 326-346 (HITI…VVLG), and 357-377 (LPQM…LLIP). The disordered stretch occupies residues 392–449 (TPTPSHTTTKDPGRSSWRFTKPSITSKKSSTTKPPQRSGPTPASSSSSSSSFSPDTNS). 2 stretches are compositionally biased toward low complexity: residues 411 to 426 (TKPS…TKPP) and 435 to 449 (SSSS…DTNS). The N-linked (GlcNAc...) asparagine glycan is linked to asparagine 448. Transmembrane regions (helical) follow at residues 469–489 (PFYL…NTII) and 503–525 (YIFR…AYTL). The span at 584–593 (QKNIKDKQKE) shows a compositional bias: basic and acidic residues. Positions 584–605 (QKNIKDKQKEVEEEEEEEEKED) are disordered. Over residues 594 to 604 (VEEEEEEEEKE) the composition is skewed to acidic residues. A run of 2 helical transmembrane segments spans residues 631 to 651 (TSTV…APLV) and 656 to 676 (FILP…SSSL). The segment at 682–708 (SSSFASSTTESGNGDGNDAATAARQQQ) is disordered. The helical transmembrane segment at 728-748 (LALETVWFLAINIGTMYMFLF) threads the bilayer.

Belongs to the ALG10 glucosyltransferase family.

The protein resides in the endoplasmic reticulum membrane. The enzyme catalyses an alpha-D-Glc-(1-&gt;3)-alpha-D-Glc-(1-&gt;3)-alpha-D-Man-(1-&gt;2)-alpha-D-Man-(1-&gt;2)-alpha-D-Man-(1-&gt;3)-[alpha-D-Man-(1-&gt;2)-alpha-D-Man-(1-&gt;3)-[alpha-D-Man-(1-&gt;2)-alpha-D-Man-(1-&gt;6)]-alpha-D-Man-(1-&gt;6)]-beta-D-Man-(1-&gt;4)-beta-D-GlcNAc-(1-&gt;4)-alpha-D-GlcNAc-diphospho-di-trans,poly-cis-dolichol + a di-trans,poly-cis-dolichyl beta-D-glucosyl phosphate = a alpha-D-Glc-(1-&gt;2)-alpha-D-Glc-(1-&gt;3)-alpha-D-Glc-(1-&gt;3)-alpha-D-Man-(1-&gt;2)-alpha-D-Man-(1-&gt;2)-alpha-D-Man-(1-&gt;3)-[alpha-D-Man-(1-&gt;2)-alpha-D-Man-(1-&gt;3)-[alpha-D-Man-(1-&gt;2)-alpha-D-Man-(1-&gt;6)]-alpha-D-Man-(1-&gt;6)]-beta-D-Man-(1-&gt;4)-beta-D-GlcNAc-(1-&gt;4)-alpha-D-GlcNAc-diphospho-di-trans,poly-cis-dolichol + a di-trans,poly-cis-dolichyl phosphate + H(+). It functions in the pathway protein modification; protein glycosylation. Functionally, dol-P-Glc:Glc(2)Man(9)GlcNAc(2)-PP-Dol alpha-1,2-glucosyltransferase that operates in the biosynthetic pathway of dolichol-linked oligosaccharides, the glycan precursors employed in protein asparagine (N)-glycosylation. The assembly of dolichol-linked oligosaccharides begins on the cytosolic side of the endoplasmic reticulum membrane and finishes in its lumen. The sequential addition of sugars to dolichol pyrophosphate produces dolichol-linked oligosaccharides containing fourteen sugars, including two GlcNAcs, nine mannoses and three glucoses. Once assembled, the oligosaccharide is transferred from the lipid to nascent proteins by oligosaccharyltransferases. In the lumen of the endoplasmic reticulum, adds the third and last glucose residue from dolichyl phosphate glucose (Dol-P-Glc) onto the lipid-linked oligosaccharide intermediate Glc(2)Man(9)GlcNAc(2)-PP-Dol to produce Glc(3)Man(9)GlcNAc(2)-PP-Dol. This Neurospora crassa (strain ATCC 24698 / 74-OR23-1A / CBS 708.71 / DSM 1257 / FGSC 987) protein is Dol-P-Glc:Glc(2)Man(9)GlcNAc(2)-PP-Dol alpha-1,2-glucosyltransferase (alg-10).